A 308-amino-acid chain; its full sequence is UDP-N-acetylenolpyruvoylglucosamine reductase (308 aa).

One can recognise an FAD-binding PCMH-type domain in the interval Gln32–Gly197. The active site involves Arg176. The Proton donor role is filled by Ser226. The active site involves Glu296.

The protein belongs to the MurB family. FAD serves as cofactor.

The protein localises to the cytoplasm. The enzyme catalyses UDP-N-acetyl-alpha-D-muramate + NADP(+) = UDP-N-acetyl-3-O-(1-carboxyvinyl)-alpha-D-glucosamine + NADPH + H(+). It functions in the pathway cell wall biogenesis; peptidoglycan biosynthesis. In terms of biological role, cell wall formation. The chain is UDP-N-acetylenolpyruvoylglucosamine reductase from Staphylococcus saprophyticus subsp. saprophyticus (strain ATCC 15305 / DSM 20229 / NCIMB 8711 / NCTC 7292 / S-41).